The following is a 252-amino-acid chain: Imidazole glycerol phosphate synthase subunit HisF (252 aa).

Active-site residues include Asp11 and Asp130.

Belongs to the HisA/HisF family. As to quaternary structure, heterodimer of HisH and HisF.

The protein localises to the cytoplasm. It carries out the reaction 5-[(5-phospho-1-deoxy-D-ribulos-1-ylimino)methylamino]-1-(5-phospho-beta-D-ribosyl)imidazole-4-carboxamide + L-glutamine = D-erythro-1-(imidazol-4-yl)glycerol 3-phosphate + 5-amino-1-(5-phospho-beta-D-ribosyl)imidazole-4-carboxamide + L-glutamate + H(+). The protein operates within amino-acid biosynthesis; L-histidine biosynthesis; L-histidine from 5-phospho-alpha-D-ribose 1-diphosphate: step 5/9. Its function is as follows. IGPS catalyzes the conversion of PRFAR and glutamine to IGP, AICAR and glutamate. The HisF subunit catalyzes the cyclization activity that produces IGP and AICAR from PRFAR using the ammonia provided by the HisH subunit. In Bacillus cereus (strain AH187), this protein is Imidazole glycerol phosphate synthase subunit HisF.